Reading from the N-terminus, the 137-residue chain is Large ribosomal subunit protein uL16 (137 aa).

The protein belongs to the universal ribosomal protein uL16 family. In terms of assembly, part of the 50S ribosomal subunit.

Binds 23S rRNA and is also seen to make contacts with the A and possibly P site tRNAs. The polypeptide is Large ribosomal subunit protein uL16 (Nitrobacter winogradskyi (strain ATCC 25391 / DSM 10237 / CIP 104748 / NCIMB 11846 / Nb-255)).